We begin with the raw amino-acid sequence, 446 residues long: Glutamate-1-semialdehyde 2,1-aminomutase (446 aa).

Lys-278 carries the post-translational modification N6-(pyridoxal phosphate)lysine.

This sequence belongs to the class-III pyridoxal-phosphate-dependent aminotransferase family. HemL subfamily. As to quaternary structure, homodimer. Pyridoxal 5'-phosphate is required as a cofactor.

It localises to the cytoplasm. The enzyme catalyses (S)-4-amino-5-oxopentanoate = 5-aminolevulinate. It functions in the pathway porphyrin-containing compound metabolism; protoporphyrin-IX biosynthesis; 5-aminolevulinate from L-glutamyl-tRNA(Glu): step 2/2. The polypeptide is Glutamate-1-semialdehyde 2,1-aminomutase (Deinococcus geothermalis (strain DSM 11300 / CIP 105573 / AG-3a)).